The primary structure comprises 369 residues: Queuine tRNA-ribosyltransferase (369 aa).

D89 functions as the Proton acceptor in the catalytic mechanism. Substrate is bound by residues 89–93, D142, Q184, and G211; that span reads DSGGF. The RNA binding stretch occupies residues 242-248; sequence GGGSPEL. Catalysis depends on D261, which acts as the Nucleophile. Residues 266–270 form an RNA binding; important for wobble base 34 recognition region; that stretch reads TRIAR. Zn(2+)-binding residues include C299, C301, C304, and H330.

The protein belongs to the queuine tRNA-ribosyltransferase family. As to quaternary structure, homodimer. Within each dimer, one monomer is responsible for RNA recognition and catalysis, while the other monomer binds to the replacement base PreQ1. It depends on Zn(2+) as a cofactor.

The catalysed reaction is 7-aminomethyl-7-carbaguanine + guanosine(34) in tRNA = 7-aminomethyl-7-carbaguanosine(34) in tRNA + guanine. It functions in the pathway tRNA modification; tRNA-queuosine biosynthesis. In terms of biological role, catalyzes the base-exchange of a guanine (G) residue with the queuine precursor 7-aminomethyl-7-deazaguanine (PreQ1) at position 34 (anticodon wobble position) in tRNAs with GU(N) anticodons (tRNA-Asp, -Asn, -His and -Tyr). Catalysis occurs through a double-displacement mechanism. The nucleophile active site attacks the C1' of nucleotide 34 to detach the guanine base from the RNA, forming a covalent enzyme-RNA intermediate. The proton acceptor active site deprotonates the incoming PreQ1, allowing a nucleophilic attack on the C1' of the ribose to form the product. After dissociation, two additional enzymatic reactions on the tRNA convert PreQ1 to queuine (Q), resulting in the hypermodified nucleoside queuosine (7-(((4,5-cis-dihydroxy-2-cyclopenten-1-yl)amino)methyl)-7-deazaguanosine). This chain is Queuine tRNA-ribosyltransferase, found in Thermotoga maritima (strain ATCC 43589 / DSM 3109 / JCM 10099 / NBRC 100826 / MSB8).